Reading from the N-terminus, the 319-residue chain is Thioredoxin reductase (319 aa).

FAD is bound by residues 11–14, 40–41, Gln-45, Asn-54, Val-87, Cys-145, Asp-288, and 295–297; these read SGPA, IA, and RQA. Residues Cys-142 and Cys-145 are joined by a disulfide bond.

The protein belongs to the class-II pyridine nucleotide-disulfide oxidoreductase family. Homodimer. FAD serves as cofactor.

Its subcellular location is the cytoplasm. It catalyses the reaction [thioredoxin]-dithiol + NADP(+) = [thioredoxin]-disulfide + NADPH + H(+). The sequence is that of Thioredoxin reductase (TRR1) from Yarrowia lipolytica (strain CLIB 122 / E 150) (Yeast).